Here is a 122-residue protein sequence, read N- to C-terminus: Diacylglycerol kinase (122 aa).

The ATP site is built by Arg10 and Tyr17. Residues Arg10, Ala14–Trp19, and Arg23–Trp26 contribute to the substrate site. An ATP-binding site is contributed by Glu29. A divalent metal cation is bound at residue Glu29. Substrate is bound by residues Ala31–Glu35, Trp48–Val51, Arg56, and Glu70. A helical membrane pass occupies residues Glu35–Thr55. Residues Val57–Glu77 traverse the membrane as a helical segment. The Proton acceptor role is filled by Glu70. ATP contacts are provided by residues Glu77, Glu86–His88, and Lys95–Asp96. Glu77 contacts a divalent metal cation. A helical transmembrane segment spans residues Gly98–Trp118. Substrate-binding positions include Ser99 and Trp113–Trp118.

It belongs to the bacterial diacylglycerol kinase family. Mg(2+) is required as a cofactor.

It is found in the cell inner membrane. It catalyses the reaction a 1,2-diacyl-sn-glycerol + ATP = a 1,2-diacyl-sn-glycero-3-phosphate + ADP + H(+). In terms of biological role, catalyzes the ATP-dependent phosphorylation of sn-l,2-diacylglycerol (DAG) to phosphatidic acid. Involved in the recycling of diacylglycerol produced as a by-product during membrane-derived oligosaccharide (MDO) biosynthesis. The polypeptide is Diacylglycerol kinase (dgkA) (Shigella flexneri).